The following is a 144-amino-acid chain: Large ribosomal subunit protein uL16 (144 aa).

Over residues 1–19 the composition is skewed to basic residues; the sequence is MLLPKRVKYRRQHRPKTTG. The segment at 1 to 23 is disordered; sequence MLLPKRVKYRRQHRPKTTGRSKG.

Belongs to the universal ribosomal protein uL16 family. Part of the 50S ribosomal subunit.

Functionally, binds 23S rRNA and is also seen to make contacts with the A and possibly P site tRNAs. In Staphylococcus epidermidis (strain ATCC 35984 / DSM 28319 / BCRC 17069 / CCUG 31568 / BM 3577 / RP62A), this protein is Large ribosomal subunit protein uL16.